The chain runs to 91 residues: DNA-directed RNA polymerase subunit Rpo11 (91 aa).

This sequence belongs to the archaeal Rpo11/eukaryotic RPB11/RPC19 RNA polymerase subunit family. Part of the RNA polymerase complex.

The protein localises to the cytoplasm. The catalysed reaction is RNA(n) + a ribonucleoside 5'-triphosphate = RNA(n+1) + diphosphate. Its function is as follows. DNA-dependent RNA polymerase (RNAP) catalyzes the transcription of DNA into RNA using the four ribonucleoside triphosphates as substrates. This Methanothrix thermoacetophila (strain DSM 6194 / JCM 14653 / NBRC 101360 / PT) (Methanosaeta thermophila) protein is DNA-directed RNA polymerase subunit Rpo11.